The following is a 440-amino-acid chain: Glutamyl-tRNA reductase (440 aa).

Substrate is bound by residues 50 to 53 (TCNR), S109, 114 to 116 (EPQ), and Q120. The Nucleophile role is filled by C51. 189–194 (GAGEMA) contributes to the NADP(+) binding site.

The protein belongs to the glutamyl-tRNA reductase family. In terms of assembly, homodimer.

The enzyme catalyses (S)-4-amino-5-oxopentanoate + tRNA(Glu) + NADP(+) = L-glutamyl-tRNA(Glu) + NADPH + H(+). It functions in the pathway porphyrin-containing compound metabolism; protoporphyrin-IX biosynthesis; 5-aminolevulinate from L-glutamyl-tRNA(Glu): step 1/2. Catalyzes the NADPH-dependent reduction of glutamyl-tRNA(Glu) to glutamate 1-semialdehyde (GSA). The chain is Glutamyl-tRNA reductase from Nitratidesulfovibrio vulgaris (strain DP4) (Desulfovibrio vulgaris).